We begin with the raw amino-acid sequence, 229 residues long: 2-C-methyl-D-erythritol 4-phosphate cytidylyltransferase (229 aa).

Belongs to the IspD/TarI cytidylyltransferase family. IspD subfamily.

The catalysed reaction is 2-C-methyl-D-erythritol 4-phosphate + CTP + H(+) = 4-CDP-2-C-methyl-D-erythritol + diphosphate. The protein operates within isoprenoid biosynthesis; isopentenyl diphosphate biosynthesis via DXP pathway; isopentenyl diphosphate from 1-deoxy-D-xylulose 5-phosphate: step 2/6. Catalyzes the formation of 4-diphosphocytidyl-2-C-methyl-D-erythritol from CTP and 2-C-methyl-D-erythritol 4-phosphate (MEP). This Clostridium botulinum (strain 657 / Type Ba4) protein is 2-C-methyl-D-erythritol 4-phosphate cytidylyltransferase.